Reading from the N-terminus, the 783-residue chain is Glucosidase YgjK (783 aa).

The signal sequence occupies residues Met-1–Ala-22. The interval Asn-24 to Leu-254 is N-terminal domain. The interval Leu-254–Thr-299 is linker. Residues Pro-300–Gln-783 form an a domain region. Ca(2+) is bound by residues Asp-454, Asn-456, Asn-458, Val-460, and Glu-462. The active-site Proton donor is Asp-524. Glu-572 is a Ca(2+) binding site. Glu-750 (proton acceptor) is an active-site residue.

It belongs to the glycosyl hydrolase 63 family.

In terms of biological role, glucoside hydrolase that cleaves the alpha-1,3-glucosidic linkage in nigerose. Has very low activity towards maltooligosaccharides, soluble starch, nigerotriose, kojibiose and trehalose. The sequence is that of Glucosidase YgjK (ygjK) from Escherichia coli (strain K12).